Reading from the N-terminus, the 143-residue chain is Putative 2'-deoxynucleoside 5'-phosphate N-hydrolase 1 (143 aa).

Substrate-binding positions include H37, E82, and 106 to 108; that span reads SAM.

This sequence belongs to the 2'-deoxynucleoside 5'-phosphate N-hydrolase 1 family. Monomer and homodimer.

It carries out the reaction a pyrimidine 2'-deoxyribonucleoside 5'-phosphate + H2O = a pyrimidine nucleobase + 2-deoxy-D-ribose 5-phosphate. The enzyme catalyses a purine 2'-deoxyribonucleoside 5'-phosphate + H2O = a purine nucleobase + 2-deoxy-D-ribose 5-phosphate. Catalyzes the cleavage of the N-glycosidic bond of deoxyribonucleoside 5'-monophosphates to yield deoxyribose 5-phosphate and a purine or pyrimidine base. The protein is Putative 2'-deoxynucleoside 5'-phosphate N-hydrolase 1 of Thermofilum pendens (strain DSM 2475 / Hrk 5).